The following is a 212-amino-acid chain: Pyrrolidone-carboxylate peptidase (212 aa).

Catalysis depends on residues glutamate 78, cysteine 141, and histidine 165.

It belongs to the peptidase C15 family. Homotetramer.

The protein localises to the cytoplasm. The catalysed reaction is Release of an N-terminal pyroglutamyl group from a polypeptide, the second amino acid generally not being Pro.. In terms of biological role, removes 5-oxoproline from various penultimate amino acid residues except L-proline. The sequence is that of Pyrrolidone-carboxylate peptidase from Staphylococcus aureus (strain NCTC 8325 / PS 47).